The primary structure comprises 335 residues: Ubiquinone biosynthesis protein COQ4, mitochondrial (335 aa).

A mitochondrion-targeting transit peptide spans 1-10 (MLRLSLLRST). 4 residues coordinate Zn(2+): H210, D211, H214, and E226.

It belongs to the COQ4 family. Component of a multi-subunit COQ enzyme complex, composed of at least COQ3, COQ4, COQ5, COQ6, COQ7 and COQ9. Interacts with COQ3. Requires Zn(2+) as cofactor.

It is found in the mitochondrion inner membrane. The enzyme catalyses 4-hydroxy-3-methoxy-5-(all-trans-hexaprenyl)benzoate + H(+) = 2-methoxy-6-(all-trans-hexaprenyl)phenol + CO2. It functions in the pathway cofactor biosynthesis; ubiquinone biosynthesis. Lyase that catalyzes the C1-decarboxylation of 4-hydroxy-3-methoxy-5-(all-trans-hexaprenyl)benzoic acid into 2-methoxy-6-(all-trans-hexaprenyl)phenol during ubiquinone biosynthesis. This Saccharomyces cerevisiae (strain YJM789) (Baker's yeast) protein is Ubiquinone biosynthesis protein COQ4, mitochondrial.